We begin with the raw amino-acid sequence, 231 residues long: CLAVATA3/ESR (CLE)-related protein 4B-2 (231 aa).

The N-terminal stretch at 1 to 21 is a signal peptide; sequence MATNTMLCLLILSVVLALAFA. A required for secretion from the host cytoplasm to the host apoplasm region spans residues 21-83; the sequence is ATNKKGDEEP…SNQLPNNNWM (63 aa). N32 carries N-linked (GlcNAc...) asparagine glycosylation. The segment at 116 to 231 is disordered; sequence RKTGMHSQRH…APAGPDPIHH (116 aa). 2 stretches are compositionally biased toward basic and acidic residues: residues 125–137 and 144–221; these read HHEETTLEQEKRV and PIHH…EKRG. One copy of the A-1 repeat lies at 127–135; sequence EETTLEQEK. Positions 127-219 are 5 X approximate repeat A; the sequence is EETTLEQEKR…HEETTFEQEK (93 aa). One copy of the CLE-1 repeat lies at 136 to 147; it reads RVAGAGPDPIHH. The segment at 136 to 231 is 5 X approximate repeat CLE; that stretch reads RVAGAGPDPI…APAGPDPIHH (96 aa). Residues 148–156 form an A-2 repeat; sequence EETTLEQEK. The CLE-2 repeat unit spans residues 157-168; sequence RAVPAGPDPKHH. Residues 169–177 form an A-3 repeat; it reads EETTLEQEK. One copy of the CLE-3 repeat lies at 178 to 189; the sequence is RAVPAGPDPKHH. One copy of the A-4 repeat lies at 190 to 198; that stretch reads EETTLEQEK. One copy of the CLE-4 repeat lies at 199–210; it reads RAVPAGPDPKHH. One copy of the A-5 repeat lies at 211–219; sequence EETTFEQEK. Residues 220 to 231 form a CLE-5 repeat; sequence RGAPAGPDPIHH.

This sequence belongs to the CLV3/ESR signal peptide family. In terms of tissue distribution, highly expressed exclusively within the dorsal esophageal gland cell during syncytium formation in host plants.

It is found in the secreted. The protein localises to the host cytoplasm. The protein resides in the host extracellular space. It localises to the extracellular space. Its subcellular location is the apoplast. Functionally, mimics host plant CLE extracellular signal peptides that regulate cell fate. May play a role in the differentiation or division of feeding cells (syncytia) induced in plant roots during infection. This chain is CLAVATA3/ESR (CLE)-related protein 4B-2 (CLE-4B-2), found in Globodera rostochiensis (Golden nematode worm).